The primary structure comprises 162 residues: NADH-quinone oxidoreductase subunit I (162 aa).

4Fe-4S ferredoxin-type domains follow at residues Leu-53–Glu-83 and Thr-93–Asn-122. Positions 63, 66, 69, 73, 102, 105, 108, and 112 each coordinate [4Fe-4S] cluster.

Belongs to the complex I 23 kDa subunit family. As to quaternary structure, NDH-1 is composed of 14 different subunits. Subunits NuoA, H, J, K, L, M, N constitute the membrane sector of the complex. [4Fe-4S] cluster is required as a cofactor.

It is found in the cell inner membrane. It carries out the reaction a quinone + NADH + 5 H(+)(in) = a quinol + NAD(+) + 4 H(+)(out). In terms of biological role, NDH-1 shuttles electrons from NADH, via FMN and iron-sulfur (Fe-S) centers, to quinones in the respiratory chain. The immediate electron acceptor for the enzyme in this species is believed to be ubiquinone. Couples the redox reaction to proton translocation (for every two electrons transferred, four hydrogen ions are translocated across the cytoplasmic membrane), and thus conserves the redox energy in a proton gradient. This Rhodospirillum rubrum (strain ATCC 11170 / ATH 1.1.1 / DSM 467 / LMG 4362 / NCIMB 8255 / S1) protein is NADH-quinone oxidoreductase subunit I.